We begin with the raw amino-acid sequence, 163 residues long: Cyclic pyranopterin monophosphate synthase (163 aa).

Substrate contacts are provided by residues 79 to 81 (LCH) and 118 to 119 (ME). Asp-133 is a catalytic residue.

This sequence belongs to the MoaC family. Homohexamer; trimer of dimers.

The catalysed reaction is (8S)-3',8-cyclo-7,8-dihydroguanosine 5'-triphosphate = cyclic pyranopterin phosphate + diphosphate. The protein operates within cofactor biosynthesis; molybdopterin biosynthesis. Functionally, catalyzes the conversion of (8S)-3',8-cyclo-7,8-dihydroguanosine 5'-triphosphate to cyclic pyranopterin monophosphate (cPMP). This Nocardioides sp. (strain ATCC BAA-499 / JS614) protein is Cyclic pyranopterin monophosphate synthase.